Reading from the N-terminus, the 587-residue chain is Proteasome-associated ATPase (587 aa).

Positions 9-94 (ARKAQHDAEI…KEEVDRLAQP (86 aa)) form a coiled coil. 276 to 281 (GCGKTL) is a binding site for ATP. The docks into pockets in the proteasome alpha-ring stretch occupies residues 586–587 (YL).

Belongs to the AAA ATPase family. Homohexamer. Assembles into a hexameric ring structure that caps the 20S proteasome core. Strongly interacts with the prokaryotic ubiquitin-like protein Pup through a hydrophobic interface; the interacting region of ARC lies in its N-terminal coiled-coil domain. There is one Pup binding site per ARC hexamer ring. Upon ATP-binding, the C-terminus of ARC interacts with the alpha-rings of the proteasome core, possibly by binding to the intersubunit pockets.

It functions in the pathway protein degradation; proteasomal Pup-dependent pathway. Its function is as follows. ATPase which is responsible for recognizing, binding, unfolding and translocation of pupylated proteins into the bacterial 20S proteasome core particle. May be essential for opening the gate of the 20S proteasome via an interaction with its C-terminus, thereby allowing substrate entry and access to the site of proteolysis. Thus, the C-termini of the proteasomal ATPase may function like a 'key in a lock' to induce gate opening and therefore regulate proteolysis. This is Proteasome-associated ATPase from Thermomonospora curvata (strain ATCC 19995 / DSM 43183 / JCM 3096 / KCTC 9072 / NBRC 15933 / NCIMB 10081 / Henssen B9).